Consider the following 585-residue polypeptide: Arginine--tRNA ligase (585 aa).

The 'HIGH' region motif lies at Ala-131–His-141.

The protein belongs to the class-I aminoacyl-tRNA synthetase family. Monomer.

It localises to the cytoplasm. It catalyses the reaction tRNA(Arg) + L-arginine + ATP = L-arginyl-tRNA(Arg) + AMP + diphosphate. The sequence is that of Arginine--tRNA ligase from Brucella anthropi (strain ATCC 49188 / DSM 6882 / CCUG 24695 / JCM 21032 / LMG 3331 / NBRC 15819 / NCTC 12168 / Alc 37) (Ochrobactrum anthropi).